We begin with the raw amino-acid sequence, 432 residues long: Glutamyl-tRNA reductase (432 aa).

Residues 55 to 58 (TCNR), S114, 119 to 121 (ETQ), and Q125 contribute to the substrate site. The active-site Nucleophile is the C56. 194 to 199 (GAGEMI) provides a ligand contact to NADP(+).

This sequence belongs to the glutamyl-tRNA reductase family. As to quaternary structure, homodimer.

It catalyses the reaction (S)-4-amino-5-oxopentanoate + tRNA(Glu) + NADP(+) = L-glutamyl-tRNA(Glu) + NADPH + H(+). It participates in porphyrin-containing compound metabolism; protoporphyrin-IX biosynthesis; 5-aminolevulinate from L-glutamyl-tRNA(Glu): step 1/2. Catalyzes the NADPH-dependent reduction of glutamyl-tRNA(Glu) to glutamate 1-semialdehyde (GSA). The chain is Glutamyl-tRNA reductase from Burkholderia ambifaria (strain ATCC BAA-244 / DSM 16087 / CCUG 44356 / LMG 19182 / AMMD) (Burkholderia cepacia (strain AMMD)).